A 332-amino-acid polypeptide reads, in one-letter code: D-galactose/methyl-galactoside binding periplasmic protein MglB (332 aa).

The first 23 residues, 1-23, serve as a signal peptide directing secretion; that stretch reads MNKKVLTLSAVMASMLFGAAAHA. Beta-D-galactose-binding residues include Asp37 and Asn114. Asp37 and Asn114 together coordinate beta-D-glucose. Positions 157, 159, 161, 163, and 165 each coordinate Ca(2+). His175, Asp177, and Arg181 together coordinate beta-D-galactose. Residues His175, Asp177, and Arg181 each coordinate beta-D-glucose. Residue Glu228 participates in Ca(2+) binding. Beta-D-galactose is bound by residues Asn234, Asp259, and Asn279. Positions 234, 259, and 279 each coordinate beta-D-glucose.

Belongs to the bacterial solute-binding protein 2 family. As to quaternary structure, the ABC transporter complex is composed of one ATP-binding protein (MglA), two transmembrane proteins (MglC) and a solute-binding protein (MglB).

Its subcellular location is the periplasm. Its function is as follows. Part of the ABC transporter complex MglABC involved in galactose/methyl galactoside import. In addition, binds D-galactose and D-glucose and plays a role in the chemotaxis towards these two sugars by interacting with the Trg chemoreceptor. In Escherichia coli O6:H1 (strain CFT073 / ATCC 700928 / UPEC), this protein is D-galactose/methyl-galactoside binding periplasmic protein MglB (mglB).